The sequence spans 37 residues: Neuropeptide Y1-like conopeptide (37 aa).

Phenylalanine 37 is subject to Phenylalanine amide.

The protein belongs to the NPY family. In terms of tissue distribution, expressed by the venom duct.

Its subcellular location is the secreted. In terms of biological role, causes hyperactivity such as jumping, rapid circling and tail flicking, when intraventricularly injected into mice brain. In Conus betulinus (Beech cone), this protein is Neuropeptide Y1-like conopeptide.